A 164-amino-acid polypeptide reads, in one-letter code: Crossover junction endodeoxyribonuclease RuvC (164 aa).

Catalysis depends on residues Asp-7, Glu-67, and Asp-140. Mg(2+) is bound by residues Asp-7, Glu-67, and Asp-140.

Belongs to the RuvC family. In terms of assembly, homodimer which binds Holliday junction (HJ) DNA. The HJ becomes 2-fold symmetrical on binding to RuvC with unstacked arms; it has a different conformation from HJ DNA in complex with RuvA. In the full resolvosome a probable DNA-RuvA(4)-RuvB(12)-RuvC(2) complex forms which resolves the HJ. The cofactor is Mg(2+).

Its subcellular location is the cytoplasm. The catalysed reaction is Endonucleolytic cleavage at a junction such as a reciprocal single-stranded crossover between two homologous DNA duplexes (Holliday junction).. The RuvA-RuvB-RuvC complex processes Holliday junction (HJ) DNA during genetic recombination and DNA repair. Endonuclease that resolves HJ intermediates. Cleaves cruciform DNA by making single-stranded nicks across the HJ at symmetrical positions within the homologous arms, yielding a 5'-phosphate and a 3'-hydroxyl group; requires a central core of homology in the junction. The consensus cleavage sequence is 5'-(A/T)TT(C/G)-3'. Cleavage occurs on the 3'-side of the TT dinucleotide at the point of strand exchange. HJ branch migration catalyzed by RuvA-RuvB allows RuvC to scan DNA until it finds its consensus sequence, where it cleaves and resolves the cruciform DNA. This chain is Crossover junction endodeoxyribonuclease RuvC, found in Alkaliphilus metalliredigens (strain QYMF).